The sequence spans 391 residues: Elongation factor Tu (391 aa).

One can recognise a tr-type G domain in the interval 10 to 201; that stretch reads KPHVNIGTIG…AVDAYIPTPE (192 aa). A G1 region spans residues 19-26; sequence GHVDHGKT. 19-26 provides a ligand contact to GTP; that stretch reads GHVDHGKT. T26 serves as a coordination point for Mg(2+). The segment at 55–59 is G2; that stretch reads GITIS. Residues 76-79 form a G3 region; it reads DCPG. Residues 76–80 and 131–134 each bind GTP; these read DCPGH and NKVD. A G4 region spans residues 131-134; that stretch reads NKVD. A G5 region spans residues 169 to 171; it reads SAL.

Belongs to the TRAFAC class translation factor GTPase superfamily. Classic translation factor GTPase family. EF-Tu/EF-1A subfamily. As to quaternary structure, monomer.

Its subcellular location is the cytoplasm. It carries out the reaction GTP + H2O = GDP + phosphate + H(+). Its function is as follows. GTP hydrolase that promotes the GTP-dependent binding of aminoacyl-tRNA to the A-site of ribosomes during protein biosynthesis. The sequence is that of Elongation factor Tu from Rhizobium johnstonii (strain DSM 114642 / LMG 32736 / 3841) (Rhizobium leguminosarum bv. viciae).